The sequence spans 251 residues: Probable transcriptional regulatory protein MLBr00475 (251 aa).

The protein belongs to the TACO1 family.

It is found in the cytoplasm. The chain is Probable transcriptional regulatory protein MLBr00475 from Mycobacterium leprae (strain Br4923).